The following is a 154-amino-acid chain: Large ribosomal subunit protein uL30 (154 aa).

The tract at residues R122–H141 is disordered.

This sequence belongs to the universal ribosomal protein uL30 family. In terms of assembly, part of the 50S ribosomal subunit.

This Halobacterium salinarum (strain ATCC 29341 / DSM 671 / R1) protein is Large ribosomal subunit protein uL30.